The following is a 392-amino-acid chain: Protein RecA (392 aa).

Residues 1–21 form a disordered region; it reads MALETKPAQDPATEIKHELDP. ATP is bound at residue 83 to 90; the sequence is GPESSGKT. Residues 372–392 are disordered; that stretch reads DAAKDTKATAAPAAKSSRAKA. A compositionally biased stretch (low complexity) spans 379–392; the sequence is ATAAPAAKSSRAKA.

This sequence belongs to the RecA family.

It is found in the cytoplasm. Can catalyze the hydrolysis of ATP in the presence of single-stranded DNA, the ATP-dependent uptake of single-stranded DNA by duplex DNA, and the ATP-dependent hybridization of homologous single-stranded DNAs. It interacts with LexA causing its activation and leading to its autocatalytic cleavage. This is Protein RecA from Bifidobacterium breve.